The chain runs to 283 residues: Bifunctional protein FolD (283 aa).

NADP(+) is bound by residues 165 to 167 (GRG), threonine 192, and valine 233.

It belongs to the tetrahydrofolate dehydrogenase/cyclohydrolase family. Homodimer.

The catalysed reaction is (6R)-5,10-methylene-5,6,7,8-tetrahydrofolate + NADP(+) = (6R)-5,10-methenyltetrahydrofolate + NADPH. The enzyme catalyses (6R)-5,10-methenyltetrahydrofolate + H2O = (6R)-10-formyltetrahydrofolate + H(+). Its pathway is one-carbon metabolism; tetrahydrofolate interconversion. Its function is as follows. Catalyzes the oxidation of 5,10-methylenetetrahydrofolate to 5,10-methenyltetrahydrofolate and then the hydrolysis of 5,10-methenyltetrahydrofolate to 10-formyltetrahydrofolate. The protein is Bifunctional protein FolD of Mycolicibacterium smegmatis (strain ATCC 700084 / mc(2)155) (Mycobacterium smegmatis).